The primary structure comprises 424 residues: Elongation factor 1-alpha (424 aa).

Positions 5-223 (KPHMNLVIIG…NALQVPAKPV (219 aa)) constitute a tr-type G domain. Residues 14–21 (GHVDHGKS) are G1. Residue 14–21 (GHVDHGKS) participates in GTP binding. Ser21 contributes to the Mg(2+) binding site. Positions 70–74 (GVTID) are G2. Residues 91-94 (DAPG) are G3. GTP-binding positions include 91-95 (DAPGH) and 148-151 (NKMD). Residues 148–151 (NKMD) are G4. The interval 187-189 (SGY) is G5.

The protein belongs to the TRAFAC class translation factor GTPase superfamily. Classic translation factor GTPase family. EF-Tu/EF-1A subfamily.

The protein resides in the cytoplasm. It carries out the reaction GTP + H2O = GDP + phosphate + H(+). GTP hydrolase that promotes the GTP-dependent binding of aminoacyl-tRNA to the A-site of ribosomes during protein biosynthesis. This Picrophilus torridus (strain ATCC 700027 / DSM 9790 / JCM 10055 / NBRC 100828 / KAW 2/3) protein is Elongation factor 1-alpha.